Consider the following 77-residue polypeptide: U10-lycotoxin-Ls1b (77 aa).

A signal peptide spans 1-20; it reads MKLIIFTGLVLFAIVSLIEA. Positions 21-26 are excised as a propeptide; sequence EEESGR.

Belongs to the neurotoxin 19 (CSTX) family. 09 (U10-Lctx) subfamily. In terms of processing, contains 4 disulfide bonds. As to expression, expressed by the venom gland.

It is found in the secreted. In Lycosa singoriensis (Wolf spider), this protein is U10-lycotoxin-Ls1b.